Here is a 616-residue protein sequence, read N- to C-terminus: Putative L-type lectin-domain containing receptor kinase I.10 (616 aa).

An N-terminal signal peptide occupies residues Met1–Gln22. Over Gln23–Leu288 the chain is Extracellular. Positions Glu24–Ser258 are legume-lectin like. Asn56, Asn124, Asn181, Asn204, and Asn225 each carry an N-linked (GlcNAc...) asparagine glycan. The helical transmembrane segment at Phe289 to Phe309 threads the bilayer. The Cytoplasmic segment spans residues Phe310–Pro616. The Protein kinase domain occupies Phe343 to Pro616. ATP is bound by residues Leu349 to Val357 and Lys371. Asp467 functions as the Proton acceptor in the catalytic mechanism.

It in the C-terminal section; belongs to the protein kinase superfamily. Ser/Thr protein kinase family. The protein in the N-terminal section; belongs to the leguminous lectin family.

The protein resides in the cell membrane. The enzyme catalyses L-seryl-[protein] + ATP = O-phospho-L-seryl-[protein] + ADP + H(+). It carries out the reaction L-threonyl-[protein] + ATP = O-phospho-L-threonyl-[protein] + ADP + H(+). The sequence is that of Putative L-type lectin-domain containing receptor kinase I.10 (LECRK110) from Arabidopsis thaliana (Mouse-ear cress).